Here is a 485-residue protein sequence, read N- to C-terminus: Heat stress transcription factor A-1d (485 aa).

Disordered regions lie at residues 1 to 34 (MDVS…SSNA) and 126 to 149 (RRKP…QNSS). Residues 35 to 129 (PPPFLSKTYD…LLQSITRRKP (95 aa)) mediate DNA binding. A compositionally biased stretch (low complexity) spans 136 to 146 (GHQRSQHSNGQ). Residues 152–218 (ACVEVGKFGL…QLMSFLAKAV (67 aa)) are hydrophobic repeat HR-A/B. Disordered regions lie at residues 229-269 (QQQN…GQIV) and 436-461 (PVPD…DKTK). Residues 238–252 (NRRISDTSKKRRFKR) carry the Bipartite nuclear localization signal motif. A compositionally biased stretch (polar residues) spans 441-455 (MDSTPVDNETEQEQN). The Nuclear export signal signature appears at 472 to 480 (LLSPETLDL).

Belongs to the HSF family. Class A subfamily. As to quaternary structure, homotrimer. Interacts with HSP90-2. In terms of processing, exhibits temperature-dependent phosphorylation.

The protein resides in the cytoplasm. Its subcellular location is the nucleus. Its function is as follows. Transcriptional regulator that specifically binds DNA sequence 5'-AGAAnnTTCT-3' known as heat shock promoter elements (HSE). This is Heat stress transcription factor A-1d (HSFA1D) from Arabidopsis thaliana (Mouse-ear cress).